The sequence spans 359 residues: Guanine nucleotide-binding protein subunit alpha-11 (359 aa).

S-palmitoyl cysteine attachment occurs at residues Cys-9 and Cys-10. A G-alpha domain is found at Arg-38 to Val-359. The segment at Lys-41–Thr-54 is G1 motif. Residues Gly-46–Ser-53 and Leu-180–Arg-183 contribute to the GTP site. Ser-53 is a Mg(2+) binding site. Residues Asp-178–Thr-186 are G2 motif. Residue Thr-186 coordinates Mg(2+). Residues Phe-201–Arg-210 form a G3 motif region. Residues Ile-270–Asp-277 form a G4 motif region. GTP contacts are provided by residues Asn-274–Asp-277 and Ala-331. The tract at residues Thr-329–Thr-334 is G5 motif.

Belongs to the G-alpha family. G(q) subfamily. As to quaternary structure, g proteins are composed of 3 units; alpha, beta and gamma. The alpha chain contains the guanine nucleotide binding site. Interacts with RGS22. Interacts with NTSR1.

The protein resides in the cell membrane. It localises to the cytoplasm. The catalysed reaction is GTP + H2O = GDP + phosphate + H(+). Its function is as follows. Guanine nucleotide-binding proteins (G proteins) function as transducers downstream of G protein-coupled receptors (GPCRs) in numerous signaling cascades. The alpha chain contains the guanine nucleotide binding site and alternates between an active, GTP-bound state and an inactive, GDP-bound state. Signaling by an activated GPCR promotes GDP release and GTP binding. The alpha subunit has a low GTPase activity that converts bound GTP to GDP, thereby terminating the signal. Both GDP release and GTP hydrolysis are modulated by numerous regulatory proteins. Signaling is mediated via phospholipase C-beta-dependent inositol lipid hydrolysis for signal propagation: activates phospholipase C-beta: following GPCR activation, GNA11 activates PLC-beta (PLCB1, PLCB2, PLCB3 or PLCB4), leading to production of diacylglycerol (DAG) and inositol 1,4,5-trisphosphate (IP3). Transduces FFAR4 signaling in response to long-chain fatty acids (LCFAs). Together with GNAQ, required for heart development. In the respiratory epithelium, transmits OXGR1-dependent signals that lead to downstream intracellular Ca(2+) release and mucocilliary clearance of airborne pathogens. In Mus musculus (Mouse), this protein is Guanine nucleotide-binding protein subunit alpha-11 (Gna11).